The following is an 89-amino-acid chain: Large ribosomal subunit protein bL31B (89 aa).

It belongs to the bacterial ribosomal protein bL31 family. Type B subfamily. Part of the 50S ribosomal subunit.

This Aeromonas hydrophila subsp. hydrophila (strain ATCC 7966 / DSM 30187 / BCRC 13018 / CCUG 14551 / JCM 1027 / KCTC 2358 / NCIMB 9240 / NCTC 8049) protein is Large ribosomal subunit protein bL31B.